A 342-amino-acid polypeptide reads, in one-letter code: S-adenosylmethionine:tRNA ribosyltransferase-isomerase (342 aa).

The protein belongs to the QueA family. As to quaternary structure, monomer.

The protein resides in the cytoplasm. It carries out the reaction 7-aminomethyl-7-carbaguanosine(34) in tRNA + S-adenosyl-L-methionine = epoxyqueuosine(34) in tRNA + adenine + L-methionine + 2 H(+). It participates in tRNA modification; tRNA-queuosine biosynthesis. In terms of biological role, transfers and isomerizes the ribose moiety from AdoMet to the 7-aminomethyl group of 7-deazaguanine (preQ1-tRNA) to give epoxyqueuosine (oQ-tRNA). In Shouchella clausii (strain KSM-K16) (Alkalihalobacillus clausii), this protein is S-adenosylmethionine:tRNA ribosyltransferase-isomerase.